We begin with the raw amino-acid sequence, 184 residues long: uncharacterized protein (184 aa).

Belongs to the TorD/DmsD family.

This is an uncharacterized protein from Haemophilus influenzae (strain ATCC 51907 / DSM 11121 / KW20 / Rd).